Consider the following 358-residue polypeptide: Histidinol-phosphate aminotransferase (358 aa).

An N6-(pyridoxal phosphate)lysine modification is found at K211.

The protein belongs to the class-II pyridoxal-phosphate-dependent aminotransferase family. Histidinol-phosphate aminotransferase subfamily. Homodimer. Pyridoxal 5'-phosphate serves as cofactor.

It catalyses the reaction L-histidinol phosphate + 2-oxoglutarate = 3-(imidazol-4-yl)-2-oxopropyl phosphate + L-glutamate. It participates in amino-acid biosynthesis; L-histidine biosynthesis; L-histidine from 5-phospho-alpha-D-ribose 1-diphosphate: step 7/9. This chain is Histidinol-phosphate aminotransferase, found in Blochmanniella pennsylvanica (strain BPEN).